A 402-amino-acid polypeptide reads, in one-letter code: MADAAAPDAASVRNFTINFGPQHPAAHGVLRLVLELDGEVVERVDPHIGLLHRGTEKLIEQKTYLQAIPYFDRLDYVAPMNQEHAFCLAVEKLLGIAVPRRAQLIRVLYAEIGRILSHLLNVTTQAMDVGALTPPLWGFEEREKLMMFYERASGSRMHAAYFRVGGVHQDLPPKLVDDIDAWCDAFPAVVNDLDRLLSDNRIFKQRNVDIGVVTLDQAWSWGFSGVMVRGSGAAWDLRKSQPYECYAELDFEVPIGKNGDCYDRYHIRMEEMRQSVRIMKQCIAKLRAPHGQGPVVVDDHKIFPPRRGEMKRSMEALIHHFKLYTEGFHVPAGEVYVAVEAPKGEFGVYLVSDGSNKPYKCKIRAPGFAHLQAMDFLSRGHLLADVSAILGSLDIVFGEVDR.

The protein belongs to the complex I 49 kDa subunit family. As to quaternary structure, NDH-1 is composed of 14 different subunits. Subunits NuoB, C, D, E, F, and G constitute the peripheral sector of the complex.

The protein localises to the cell inner membrane. The catalysed reaction is a quinone + NADH + 5 H(+)(in) = a quinol + NAD(+) + 4 H(+)(out). NDH-1 shuttles electrons from NADH, via FMN and iron-sulfur (Fe-S) centers, to quinones in the respiratory chain. The immediate electron acceptor for the enzyme in this species is believed to be ubiquinone. Couples the redox reaction to proton translocation (for every two electrons transferred, four hydrogen ions are translocated across the cytoplasmic membrane), and thus conserves the redox energy in a proton gradient. The chain is NADH-quinone oxidoreductase subunit D from Rhodopseudomonas palustris (strain ATCC BAA-98 / CGA009).